Here is a 400-residue protein sequence, read N- to C-terminus: Methylamine dehydrogenase heavy chain (400 aa).

Residues 1-27 (MTTFQPGRLAGQLAATALLAATCSAFA) form the signal peptide.

The protein belongs to the aromatic amine dehydrogenase heavy chain family. Tetramer of two light and two heavy chains.

Its subcellular location is the periplasm. The enzyme catalyses 2 oxidized [amicyanin] + methylamine + H2O = 2 reduced [amicyanin] + formaldehyde + NH4(+) + 2 H(+). Its function is as follows. Methylamine dehydrogenase carries out the oxidation of methylamine. Electrons are passed from methylamine dehydrogenase to amicyanin. This chain is Methylamine dehydrogenase heavy chain (mauB), found in Methylobacillus flagellatus (strain ATCC 51484 / DSM 6875 / VKM B-1610 / KT).